Reading from the N-terminus, the 190-residue chain is GTP cyclohydrolase 1 (190 aa).

The Zn(2+) site is built by Cys75, His78, and Cys146.

It belongs to the GTP cyclohydrolase I family. In terms of assembly, toroid-shaped homodecamer, composed of two pentamers of five dimers.

It carries out the reaction GTP + H2O = 7,8-dihydroneopterin 3'-triphosphate + formate + H(+). The protein operates within cofactor biosynthesis; 7,8-dihydroneopterin triphosphate biosynthesis; 7,8-dihydroneopterin triphosphate from GTP: step 1/1. The protein is GTP cyclohydrolase 1 of Campylobacter curvus (strain 525.92).